The chain runs to 480 residues: Nuclear receptor subfamily 6 group A member 1 (480 aa).

A disordered region spans residues 1–32 (MERDEPPPSGGGGGGGSAGFLEPPAALPPPPR). The segment at residues 57 to 132 (QRTCLICGDR…MGMNRKAIRE (76 aa)) is a DNA-binding region (nuclear receptor). 8 residues coordinate Zn(2+): Cys60, Cys63, Cys77, Cys80, Cys96, Cys102, Cys112, and Cys115. 2 consecutive NR C4-type zinc fingers follow at residues 60 to 80 (CLICGDRATGLHYGIISCEGC) and 96 to 120 (CSRDKNCVMSRKQRNRCQYCRLLKC). Disordered stretches follow at residues 131–150 (REDGMPGGRNKSIGPVQISE) and 162–199 (FEEEANHWSNHGDSDHSSPGNRASESNQPSPGSTLSSS). The segment covering 165–177 (EANHWSNHGDSDH) has biased composition (basic and acidic residues). The sufficient for interaction with UIMC1 stretch occupies residues 172 to 253 (HGDSDHSSPG…RSLDPQSYSL (82 aa)). A compositionally biased stretch (low complexity) spans 187 to 199 (SNQPSPGSTLSSS). In terms of domain architecture, NR LBD spans 249–480 (QSYSLIHQLL…HSCKTSVGKE (232 aa)).

The protein belongs to the nuclear hormone receptor family. NR6 subfamily. Homodimer. Interacts with UIMC1. In terms of tissue distribution, shows highest expression in the germ cells of the adult testis.

Its subcellular location is the nucleus. Its function is as follows. Orphan nuclear receptor that binds to a response element containing the sequence 5'-TCAAGGTCA-3'. Acts as a regulator of embryonic stem cell pluripotency by mediating repression of POU5F1/OCT4: binds to the DR0 element within the POU5F1/OCT4 promoter and inhibits POU5F1/OCT4 expression during embryonic stem cell differentiation. Involved in the regulation of gene expression in germ cell development during gametogenesis. This chain is Nuclear receptor subfamily 6 group A member 1 (NR6A1), found in Homo sapiens (Human).